Reading from the N-terminus, the 131-residue chain is Large ribosomal subunit protein uL22 (131 aa).

This sequence belongs to the universal ribosomal protein uL22 family. In terms of assembly, part of the 50S ribosomal subunit.

This protein binds specifically to 23S rRNA; its binding is stimulated by other ribosomal proteins, e.g. L4, L17, and L20. It is important during the early stages of 50S assembly. It makes multiple contacts with different domains of the 23S rRNA in the assembled 50S subunit and ribosome. Functionally, the globular domain of the protein is located near the polypeptide exit tunnel on the outside of the subunit, while an extended beta-hairpin is found that lines the wall of the exit tunnel in the center of the 70S ribosome. The protein is Large ribosomal subunit protein uL22 of Phytoplasma mali (strain AT).